Reading from the N-terminus, the 417-residue chain is Gamma-glutamyl phosphate reductase (417 aa).

Belongs to the gamma-glutamyl phosphate reductase family.

Its subcellular location is the cytoplasm. The catalysed reaction is L-glutamate 5-semialdehyde + phosphate + NADP(+) = L-glutamyl 5-phosphate + NADPH + H(+). Its pathway is amino-acid biosynthesis; L-proline biosynthesis; L-glutamate 5-semialdehyde from L-glutamate: step 2/2. Its function is as follows. Catalyzes the NADPH-dependent reduction of L-glutamate 5-phosphate into L-glutamate 5-semialdehyde and phosphate. The product spontaneously undergoes cyclization to form 1-pyrroline-5-carboxylate. This chain is Gamma-glutamyl phosphate reductase, found in Enterobacter sp. (strain 638).